The primary structure comprises 46 residues: Protein PsbN (46 aa).

A helical transmembrane segment spans residues 10 to 30; the sequence is VSIAVLTALLGLTGFGIYTAF.

The protein belongs to the PsbN family.

It localises to the cellular thylakoid membrane. May play a role in photosystem I and II biogenesis. This is Protein PsbN from Synechococcus sp. (strain RCC307).